The sequence spans 755 residues: Primary amine oxidase (755 aa).

A signal peptide spans 1–30 (MANGLKFSPRKTALALAVAVVCAWQSPVFA). Substrate-binding positions include 411–422 (YLDSGDYGMGTL) and 493–498 (VGNYDY). Asp-413 functions as the Proton acceptor in the catalytic mechanism. The Schiff-base intermediate with substrate; via topaquinone role is filled by Tyr-496. Tyr-496 bears the 2',4',5'-topaquinone mark. Cu cation is bound by residues His-554 and His-556. The Ca(2+) site is built by Asp-563, Leu-564, Asp-565, Glu-603, Tyr-697, Asp-700, Glu-702, and Asp-708. Residue Asp-563 participates in Mn(2+) binding. Position 565 (Asp-565) interacts with Mn(2+). Position 708 (Asp-708) interacts with Mn(2+). Cu cation is bound at residue His-719.

This sequence belongs to the copper/topaquinone oxidase family. Homodimer. It depends on Cu cation as a cofactor. Zn(2+) serves as cofactor. Requires Ca(2+) as cofactor. The cofactor is L-topaquinone. Mn(2+) is required as a cofactor. Post-translationally, topaquinone (TPQ) is generated by copper-dependent autoxidation of a specific tyrosyl residue.

The protein resides in the periplasm. It catalyses the reaction a primary methyl amine + O2 + H2O = an aldehyde + H2O2 + NH4(+). In terms of biological role, active on tyramine, tryptamine, beta-phenethylamine and dopamine. The chain is Primary amine oxidase (maoA) from Klebsiella aerogenes (Enterobacter aerogenes).